The chain runs to 53 residues: UPF0391 membrane protein Ent638_0536 (53 aa).

2 helical membrane passes run 4 to 24 (WGII…GGLA) and 27 to 47 (AAWA…VSLF).

The protein belongs to the UPF0391 family.

It is found in the cell membrane. This chain is UPF0391 membrane protein Ent638_0536, found in Enterobacter sp. (strain 638).